Reading from the N-terminus, the 365-residue chain is D-alanine--D-alanine ligase (365 aa).

Residues 156–360 (KKLMAAEGLP…YAQLLDNLIE (205 aa)) enclose the ATP-grasp domain. 183-238 (KRELGLPVFVKPARGGSSIGISRVADWSEWDAALSLAREHDSKVIVEAEIVGVEVE) is an ATP binding site. 3 residues coordinate Mg(2+): Asp-315, Glu-327, and Asn-329.

This sequence belongs to the D-alanine--D-alanine ligase family. Mg(2+) is required as a cofactor. The cofactor is Mn(2+).

Its subcellular location is the cytoplasm. It catalyses the reaction 2 D-alanine + ATP = D-alanyl-D-alanine + ADP + phosphate + H(+). The protein operates within cell wall biogenesis; peptidoglycan biosynthesis. Its function is as follows. Cell wall formation. This Corynebacterium diphtheriae (strain ATCC 700971 / NCTC 13129 / Biotype gravis) protein is D-alanine--D-alanine ligase.